The primary structure comprises 855 residues: ATP-dependent RNA helicase MAK5 (855 aa).

Disordered stretches follow at residues 1 to 43 (MVKT…KQKL) and 95 to 167 (KGEE…FTGF). Positions 8–33 (GKKKPQKVVKKQQKTQKKHNQQKLQK) are enriched in basic residues. Residues 112–150 (ELEDGDDIEVDEGEEIAQQEQENSDNDELIEEDAEEVEE) are compositionally biased toward acidic residues. A Q motif motif is present at residues 219-247 (EDKIETCLSPYILNGLSNMKFTTPTPIQK). Residues 250–449 (IPLALEGKDV…DKQQKQKSVK (200 aa)) form the Helicase ATP-binding domain. ATP is bound at residue 263 to 270 (ATTGSGKT). Positions 386 to 389 (DEAD) match the DEAD box motif. The 154-residue stretch at 515–668 (YLYYFLLMYK…KINVHSDVKL (154 aa)) folds into the Helicase C-terminal domain. A disordered region spans residues 801–855 (DLQKNGSKIKPVKGDDKMKRIAKVNQRKQAKKDAKKDAKQKRQELRHGHSNKSEE). Residues 820–830 (RIAKVNQRKQA) show a composition bias toward basic residues. Positions 831-855 (KKDAKKDAKQKRQELRHGHSNKSEE) are enriched in basic and acidic residues.

This sequence belongs to the DEAD box helicase family. DDX24/MAK5 subfamily.

The protein localises to the nucleus. It localises to the nucleolus. The catalysed reaction is ATP + H2O = ADP + phosphate + H(+). Its function is as follows. ATP-binding RNA helicase involved in the biogenesis of 60S ribosomal subunits and is required for the normal formation of 25S and 5.8S rRNAs. The protein is ATP-dependent RNA helicase MAK5 (MAK5) of Lodderomyces elongisporus (strain ATCC 11503 / CBS 2605 / JCM 1781 / NBRC 1676 / NRRL YB-4239) (Yeast).